The primary structure comprises 287 residues: rRNA adenine N-6-methyltransferase (287 aa).

The segment covering 1-13 (MKKKNHKYRGKKL) has biased composition (basic residues). Residues 1 to 21 (MKKKNHKYRGKKLNRGESPNF) form a disordered region. S-adenosyl-L-methionine contacts are provided by His25, Met27, Gly52, Glu73, Asp98, and Asn114.

The protein belongs to the class I-like SAM-binding methyltransferase superfamily. rRNA adenine N(6)-methyltransferase family.

Functionally, involved in erythromycin resistance. The protein is rRNA adenine N-6-methyltransferase (ermD) of Bacillus licheniformis.